We begin with the raw amino-acid sequence, 130 residues long: Large ribosomal subunit protein bL12 (130 aa).

This sequence belongs to the bacterial ribosomal protein bL12 family. In terms of assembly, homodimer. Part of the ribosomal stalk of the 50S ribosomal subunit. Forms a multimeric L10(L12)X complex, where L10 forms an elongated spine to which 2 to 4 L12 dimers bind in a sequential fashion. Binds GTP-bound translation factors.

Functionally, forms part of the ribosomal stalk which helps the ribosome interact with GTP-bound translation factors. Is thus essential for accurate translation. The polypeptide is Large ribosomal subunit protein bL12 (Mycobacterium leprae (strain TN)).